Reading from the N-terminus, the 388-residue chain is bZIP transcription factor 1-D (388 aa).

Disordered regions lie at residues M1–P49, F103–T249, T261–A316, and E348–N388. Low complexity-rich tracts occupy residues P23–T33 and A117–G129. Residues S169–Q179 are compositionally biased toward polar residues. Low complexity predominate over residues S180 to E193. The segment covering R214–Q231 has biased composition (polar residues). One can recognise a bZIP domain in the interval E293–L356. Positions K295–K314 are basic motif. A compositionally biased stretch (basic and acidic residues) spans S302–A316. The leucine-zipper stretch occupies residues L321 to L356. Composition is skewed to basic and acidic residues over residues N359–E369 and K375–N388.

This sequence belongs to the bZIP family. As to expression, highly expressed in roots and at lower levels in stems and leaves.

The protein localises to the nucleus. In terms of biological role, probable transcription factor that may be involved in responses to fungal pathogen infection and abiotic stresses. This Triticum aestivum (Wheat) protein is bZIP transcription factor 1-D.